The chain runs to 368 residues: DNA replication and repair protein RecF (368 aa).

ATP is bound at residue 30-37 (GNNAQGKT).

The protein belongs to the RecF family.

It localises to the cytoplasm. Its function is as follows. The RecF protein is involved in DNA metabolism; it is required for DNA replication and normal SOS inducibility. RecF binds preferentially to single-stranded, linear DNA. It also seems to bind ATP. The chain is DNA replication and repair protein RecF from Streptococcus pyogenes serotype M4 (strain MGAS10750).